Consider the following 230-residue polypeptide: UPF0500 protein C1orf216 homolog (230 aa).

Residues 1 to 103 (MFAAIQPGLA…AEPEKLSGAS (103 aa)) form a disordered region. A compositionally biased stretch (polar residues) spans 60-73 (RSSSESPSDNQVFQ). Low complexity predominate over residues 85-94 (PPEGAEIPGA).

The protein belongs to the UPF0500 family.

The polypeptide is UPF0500 protein C1orf216 homolog (Mus musculus (Mouse)).